The primary structure comprises 439 residues: MTISKVHSRYVYDSRGNPTVEVDVTTENGLFRAIVPSGASTGINEAMELRDGDKSKWQGKGVTKAVDNVNKTIAPHLIKSGLDEKNQEEIDSFLLKLDGTPNKRSLGANAILGVSLAVAKAGAAAKQVPLYRHIADISKSKQDKYVLPVPFQNVLNGGSHAGGSLAFQEFMIAPTNAPSFSEALRIGSEVYHHLKSLTKSKYGQSAGNVGDEGGVAPDIETPEEALDLIVASIEKAGYKGKVSIALDVASSEFYKDGKYDLDFKNPNSDKSKWLSGDQLADLYESLIDNYPIISIEDPFSEEDWDAWSNFYPKVASKLQIVGDDLTVTNPIFIKKAIEKKAANALLLKVNQIGTLTESIKAAQLAFSDKWGVMVSHRSGETEDHIIADIVVGLRTGQIKTGAPSRSERLAKLNQILRIEQELGDDAVYSGKGFHTAQNL.

2 residues coordinate substrate: histidine 160 and glutamate 169. Glutamate 212 acts as the Proton donor in catalysis. Mg(2+) is bound by residues aspartate 247, glutamate 296, and aspartate 323. Glutamate 296 and aspartate 323 together coordinate substrate. Residue lysine 348 is the Proton acceptor of the active site. Residues 375-378 (SHRS) and lysine 399 contribute to the substrate site.

The protein belongs to the enolase family. Homodimer. Mg(2+) serves as cofactor.

The protein resides in the cytoplasm. It carries out the reaction (2R)-2-phosphoglycerate = phosphoenolpyruvate + H2O. Its pathway is carbohydrate degradation; glycolysis; pyruvate from D-glyceraldehyde 3-phosphate: step 4/5. The polypeptide is Enolase 1 (ENO1) (Debaryomyces hansenii (strain ATCC 36239 / CBS 767 / BCRC 21394 / JCM 1990 / NBRC 0083 / IGC 2968) (Yeast)).